We begin with the raw amino-acid sequence, 277 residues long: Alpha-ketoglutarate-dependent dioxygenase tstK (277 aa).

It belongs to the asaB hydroxylase/desaturase family.

It catalyses the reaction 2-[(1R,8S,14R,15R)-11-hydroxy-14,15-bis[(6E)-oct-6-en-1-yl]-3,5,9-trioxo-4,10-dioxatetracyclo[9.4.0.0(2,6).0(8,12)]pentadeca-2(6),12-dien-8-yl]acetate + 3 2-oxoglutarate + 3 O2 = phomoidride A + 3 succinate + 3 CO2 + H2O. Alpha-ketoglutarate-dependent dioxygenase; part of the gene cluster that mediates the biosynthesis of the antihypercholesterolemic agents phomoidrides which are dimeric anhydrides. Within the pathway, tstK is responsible for the iterative oxidation necessary to convert prephomoidride to phomoidride A. The pathway begins with the highly reducing polyketide synthase tstiA that catalyzes the formation of a C12-fatty acyl-ACP, starting from one acetate and 5 malonate units. The hydrolase tstM is involved in the release of the C12-fatty acyl chain from phiA. The alkylcitrate synthase (ACS) tstJ and the alkylcitrate dehydratase (ACDH) tstI then give rise to decarboxylated monomeric anhydrides by coupling the C12-fatty acyl chain with oxalacetic acid. The cyclase tstC is responsible for the dimerization of the monomeric anhydrides which leads to the production of prephomoidride that contains the characteristic bicyclo[4.3.1]deca-1,6-diene system of phomoidrides. Iterative oxidation catalyzed by the alpha-ketoglutarate-dependent dioxygenase tstK produced then phomoidride A. Finally, the methyltransferase tstE converts phomoidride A to phomoidride B via an acetalization reaction. The phosphatidylethanolamine-binding protein tstB and tstN are not essential for dimerization and their functions have still to be determined. This chain is Alpha-ketoglutarate-dependent dioxygenase tstK, found in Talaromyces stipitatus (strain ATCC 10500 / CBS 375.48 / QM 6759 / NRRL 1006) (Penicillium stipitatum).